Reading from the N-terminus, the 198-residue chain is Elongation factor Ts (198 aa).

An involved in Mg(2+) ion dislocation from EF-Tu region spans residues 81 to 84 (TDFV).

The protein belongs to the EF-Ts family.

The protein resides in the cytoplasm. Associates with the EF-Tu.GDP complex and induces the exchange of GDP to GTP. It remains bound to the aminoacyl-tRNA.EF-Tu.GTP complex up to the GTP hydrolysis stage on the ribosome. This is Elongation factor Ts from Dictyoglomus turgidum (strain DSM 6724 / Z-1310).